A 204-amino-acid chain; its full sequence is N-alpha-acetyltransferase 40 (204 aa).

Positions 39–202 (EIYHHLEKGL…YYILYTKSRK (164 aa)) constitute an N-acetyltransferase domain. Residues tyrosine 64, 107 to 109 (TVE), and tyrosine 118 each bind substrate. Residues 120-122 (IQL) and 128-133 (GRNVGK) contribute to the acetyl-CoA site. Threonine 154 serves as a coordination point for substrate. Residue asparagine 159 coordinates acetyl-CoA. Substrate is bound at residue serine 176.

It belongs to the acetyltransferase family. NAA40 subfamily.

It localises to the cytoplasm. It is found in the nucleus. It catalyses the reaction N-terminal L-seryl-[histone H4] + acetyl-CoA = N-terminal N(alpha)-acetyl-L-seryl-[histone H4] + CoA + H(+). The catalysed reaction is N-terminal L-seryl-[histone H2A] + acetyl-CoA = N-terminal N(alpha)-acetyl-L-seryl-[histone H2A] + CoA + H(+). Functionally, N-alpha-acetyltransferase that specifically mediates the acetylation of the N-terminal residues of histones H4 and H2A. The polypeptide is N-alpha-acetyltransferase 40 (Schizosaccharomyces pombe (strain 972 / ATCC 24843) (Fission yeast)).